A 372-amino-acid chain; its full sequence is NAD(P)H-quinone oxidoreductase subunit 1 (372 aa).

8 consecutive transmembrane segments (helical) span residues 27–47 (VLWM…GVLV), 97–117 (FLFT…YLIV), 128–148 (VGAG…GLLM), 176–196 (LALA…IDIV), 204–224 (ILGW…IAAL), 254–274 (FALF…LVSI), 308–328 (ALGI…AILL), and 347–367 (FLLP…LTFP).

The protein belongs to the complex I subunit 1 family. As to quaternary structure, NDH-1 is composed of at least 11 different subunits.

It is found in the cellular thylakoid membrane. It carries out the reaction a plastoquinone + NADH + (n+1) H(+)(in) = a plastoquinol + NAD(+) + n H(+)(out). It catalyses the reaction a plastoquinone + NADPH + (n+1) H(+)(in) = a plastoquinol + NADP(+) + n H(+)(out). NDH-1 shuttles electrons from an unknown electron donor, via FMN and iron-sulfur (Fe-S) centers, to quinones in the respiratory and/or the photosynthetic chain. The immediate electron acceptor for the enzyme in this species is believed to be plastoquinone. Couples the redox reaction to proton translocation, and thus conserves the redox energy in a proton gradient. This Synechococcus elongatus (strain ATCC 33912 / PCC 7942 / FACHB-805) (Anacystis nidulans R2) protein is NAD(P)H-quinone oxidoreductase subunit 1.